We begin with the raw amino-acid sequence, 486 residues long: Transcription factor bHLH49 (486 aa).

The segment covering 1–17 has biased composition (basic and acidic residues); that stretch reads MDLSAKDEFSAEKRNPD. 2 disordered regions span residues 1–30 and 194–300; these read MDLSAKDEFSAEKRNPDNYDSVNNPSGDWR and KEST…KDGY. 2 stretches are compositionally biased toward polar residues: residues 198 to 221 and 243 to 254; these read VRSSEQAKPNVPGSGNVSEDTQSS and QKNSEAAQSHRS. Over residues 273 to 293 the composition is skewed to low complexity; that stretch reads QSPNSPGKKSNSGKQQGKQSS. A bHLH domain is found at 309–359; the sequence is QATNSHSLAERVRREKISERMKFLQDLVPGCNKVTGKAVMLDEIINYVQSL.

In terms of assembly, homodimer. Interacts with IBH1. In terms of tissue distribution, expressed constitutively in roots, stems, and flowers.

Its subcellular location is the nucleus. In terms of biological role, transcriptional activator involved in cell elongation. Regulates the expression of a subset of genes involved in cell expansion by binding to the G-box motif. In Arabidopsis thaliana (Mouse-ear cress), this protein is Transcription factor bHLH49 (BHLH49).